Reading from the N-terminus, the 307-residue chain is Small ribosomal subunit biogenesis GTPase RsgA (307 aa).

A CP-type G domain is found at 78–240; it reads HKTAFGHLIA…VIDTPGIKEL (163 aa). GTP is bound by residues 128–131 and 182–190; these read NKSD and GHSGVGKST. Positions 264, 269, 271, and 277 each coordinate Zn(2+).

The protein belongs to the TRAFAC class YlqF/YawG GTPase family. RsgA subfamily. In terms of assembly, monomer. Associates with 30S ribosomal subunit, binds 16S rRNA. Zn(2+) is required as a cofactor.

The protein localises to the cytoplasm. Its function is as follows. One of several proteins that assist in the late maturation steps of the functional core of the 30S ribosomal subunit. Helps release RbfA from mature subunits. May play a role in the assembly of ribosomal proteins into the subunit. Circularly permuted GTPase that catalyzes slow GTP hydrolysis, GTPase activity is stimulated by the 30S ribosomal subunit. The protein is Small ribosomal subunit biogenesis GTPase RsgA of Cytophaga hutchinsonii (strain ATCC 33406 / DSM 1761 / CIP 103989 / NBRC 15051 / NCIMB 9469 / D465).